Consider the following 252-residue polypeptide: uncharacterized protein (252 aa).

The stretch at 106-140 (IQSLHARRDHLDNAVEQLKSQLSRLDSSVAILKSQ) forms a coiled coil.

This is an uncharacterized protein from Caenorhabditis elegans.